Here is a 429-residue protein sequence, read N- to C-terminus: WRKY transcription factor 44 (429 aa).

Residues 159–223 (TGDRSSVDGY…YQGEHNHSKP (65 aa)) constitute a DNA-binding region (WRKY 1). Residues Cys-190, Cys-195, His-218, and His-220 each contribute to the Zn(2+) site. 2 disordered regions span residues 214 to 279 (YQGE…RTEK) and 292 to 348 (AVPR…SDSL). Polar residues-rich tracts occupy residues 254-275 (QDPNNNLYSPLWNNQSNDSTQN), 295-313 (RSTNSNPGTSDSGCKSSQC), and 334-345 (SEAGVSQGSVES). The WRKY 2 DNA-binding region spans 343–408 (VESDSLEDGF…YEGKHNHHLL (66 aa)). Residues Cys-374, Cys-379, His-403, and His-405 each coordinate Zn(2+). Residues 410-422 (SPPSSSTLPFNSP) are compositionally biased toward low complexity. The disordered stretch occupies residues 410–429 (SPPSSSTLPFNSPQLSKQTI).

It belongs to the WRKY group I family. Leaf promordia, trichomes, atrichoblasts, fertilized eggs, seed coat.

It localises to the nucleus. In terms of biological role, transcription factor. Interacts specifically with the W box (5'-(T)TGAC[CT]-3'), a frequently occurring elicitor-responsive cis-acting element. Regulates trichome development, production of mucilage and tannin in seed coats, and maybe root hair development. The protein is WRKY transcription factor 44 (WRKY44) of Arabidopsis thaliana (Mouse-ear cress).